The following is a 171-amino-acid chain: Transcription antitermination protein NusB (171 aa).

The protein belongs to the NusB family.

Its function is as follows. Involved in transcription antitermination. Required for transcription of ribosomal RNA (rRNA) genes. Binds specifically to the boxA antiterminator sequence of the ribosomal RNA (rrn) operons. In Brucella abortus (strain S19), this protein is Transcription antitermination protein NusB.